Here is a 286-residue protein sequence, read N- to C-terminus: Transcription factor MYB62 (286 aa).

HTH myb-type domains are found at residues 16–68 (DEEL…LNYL) and 69–123 (KPDI…QKQA). DNA-binding regions (H-T-H motif) lie at residues 44 to 68 (WNHV…LNYL) and 96 to 119 (WSKI…RTRV).

Expressed in leaves and flowers.

Its subcellular location is the nucleus. Functionally, transcription repressor of phosphate (Pi) starvation-induced genes. Negatively regulates Pi starvation responses via the repression of gibberellic acid (GA) biosynthesis and signaling. Modulates root architecture, phosphatase activity, and Pi uptake and accumulation. This is Transcription factor MYB62 from Arabidopsis thaliana (Mouse-ear cress).